A 286-amino-acid polypeptide reads, in one-letter code: Phosphatidylserine decarboxylase proenzyme (286 aa).

Catalysis depends on charge relay system; for autoendoproteolytic cleavage activity residues D90, H147, and S253. The active-site Schiff-base intermediate with substrate; via pyruvic acid; for decarboxylase activity is the S253. Residue S253 is modified to Pyruvic acid (Ser); by autocatalysis.

Belongs to the phosphatidylserine decarboxylase family. PSD-B subfamily. Prokaryotic type I sub-subfamily. Heterodimer of a large membrane-associated beta subunit and a small pyruvoyl-containing alpha subunit. Pyruvate serves as cofactor. Post-translationally, is synthesized initially as an inactive proenzyme. Formation of the active enzyme involves a self-maturation process in which the active site pyruvoyl group is generated from an internal serine residue via an autocatalytic post-translational modification. Two non-identical subunits are generated from the proenzyme in this reaction, and the pyruvate is formed at the N-terminus of the alpha chain, which is derived from the carboxyl end of the proenzyme. The autoendoproteolytic cleavage occurs by a canonical serine protease mechanism, in which the side chain hydroxyl group of the serine supplies its oxygen atom to form the C-terminus of the beta chain, while the remainder of the serine residue undergoes an oxidative deamination to produce ammonia and the pyruvoyl prosthetic group on the alpha chain. During this reaction, the Ser that is part of the protease active site of the proenzyme becomes the pyruvoyl prosthetic group, which constitutes an essential element of the active site of the mature decarboxylase.

The protein resides in the cell membrane. It carries out the reaction a 1,2-diacyl-sn-glycero-3-phospho-L-serine + H(+) = a 1,2-diacyl-sn-glycero-3-phosphoethanolamine + CO2. It participates in phospholipid metabolism; phosphatidylethanolamine biosynthesis; phosphatidylethanolamine from CDP-diacylglycerol: step 2/2. Its function is as follows. Catalyzes the formation of phosphatidylethanolamine (PtdEtn) from phosphatidylserine (PtdSer). The polypeptide is Phosphatidylserine decarboxylase proenzyme (Pseudoalteromonas atlantica (strain T6c / ATCC BAA-1087)).